The following is a 367-amino-acid chain: DNA polymerase IV (367 aa).

Residues 14–198 (IIHIDMDAFF…LPIAKFHGVG (185 aa)) enclose the UmuC domain. Mg(2+)-binding residues include aspartate 18 and aspartate 116. Glutamate 117 is an active-site residue.

Belongs to the DNA polymerase type-Y family. Monomer. The cofactor is Mg(2+).

The protein resides in the cytoplasm. It carries out the reaction DNA(n) + a 2'-deoxyribonucleoside 5'-triphosphate = DNA(n+1) + diphosphate. Its function is as follows. Poorly processive, error-prone DNA polymerase involved in untargeted mutagenesis. Copies undamaged DNA at stalled replication forks, which arise in vivo from mismatched or misaligned primer ends. These misaligned primers can be extended by PolIV. Exhibits no 3'-5' exonuclease (proofreading) activity. May be involved in translesional synthesis, in conjunction with the beta clamp from PolIII. This chain is DNA polymerase IV, found in Streptococcus thermophilus (strain ATCC BAA-491 / LMD-9).